The sequence spans 195 residues: Peptide deformylase (195 aa).

2 residues coordinate Fe cation: C102 and H144. The active site involves E145. H148 serves as a coordination point for Fe cation.

The protein belongs to the polypeptide deformylase family. The cofactor is Fe(2+).

It catalyses the reaction N-terminal N-formyl-L-methionyl-[peptide] + H2O = N-terminal L-methionyl-[peptide] + formate. Its function is as follows. Removes the formyl group from the N-terminal Met of newly synthesized proteins. Requires at least a dipeptide for an efficient rate of reaction. N-terminal L-methionine is a prerequisite for activity but the enzyme has broad specificity at other positions. The chain is Peptide deformylase from Salinibacter ruber (strain DSM 13855 / M31).